The chain runs to 101 residues: Small ribosomal subunit protein bS6 (101 aa).

This sequence belongs to the bacterial ribosomal protein bS6 family.

Its function is as follows. Binds together with bS18 to 16S ribosomal RNA. The chain is Small ribosomal subunit protein bS6 from Paenarthrobacter aurescens (strain TC1).